We begin with the raw amino-acid sequence, 1132 residues long: Eisosome protein SEG2 (1132 aa).

The segment covering 76 to 95 has biased composition (polar residues); it reads KRTSSLPNQGHKNTSNNSAG. Disordered stretches follow at residues 76 to 142 and 171 to 225; these read KRTS…GNSG and RYSL…NDYH. The span at 101–113 shows a compositional bias: basic and acidic residues; that stretch reads AHEDAETTFREFG. Polar residues predominate over residues 115-142; it reads KQSSKVLNISSSTGQNSKSRTTSLGNSG. Phosphoserine is present on serine 137. A compositionally biased stretch (basic and acidic residues) spans 208–225; that stretch reads GSQEKKSESGGKSKNDYH. Residue serine 280 is modified to Phosphoserine. The tract at residues 404-429 is disordered; the sequence is PTLSEPKPAYVPPEDVEKEPSTLSNQ. A phosphoserine mark is found at serine 504 and serine 507. Disordered stretches follow at residues 510-938 and 961-993; these read GGNQ…FRSM and EKKE…THTT. A Glycyl lysine isopeptide (Lys-Gly) (interchain with G-Cter in ubiquitin) cross-link involves residue lysine 526. Composition is skewed to acidic residues over residues 550–561 and 595–644; these read DQEEALSDNEPE and KDDD…DDEY. Residue serine 556 is modified to Phosphoserine. Polar residues-rich tracts occupy residues 688–699 and 710–735; these read SENAEVSQSGTN and YLTN…TDTT. A Glycyl lysine isopeptide (Lys-Gly) (interchain with G-Cter in ubiquitin) cross-link involves residue lysine 743. Residues 761–773 are compositionally biased toward low complexity; it reads SSTSSSIYSIETS. Composition is skewed to polar residues over residues 774–810 and 827–845; these read PNID…SSHQ and NRSC…TLSH. Residues 850–860 show a composition bias toward low complexity; it reads PASDSSSSPPY. Over residues 916–930 the composition is skewed to basic and acidic residues; sequence PPARKSSFEKERPAK. Phosphoserine is present on residues serine 980 and serine 1022.

The protein belongs to the SEG1 family. Component of eisosomes, large cytoplasmic protein assemblies that localize to specialized domains termed MCCs on the plasma membrane.

It localises to the cell membrane. Likely plays only a minor role in eisosome assembly. The chain is Eisosome protein SEG2 (SEG2) from Saccharomyces cerevisiae (strain ATCC 204508 / S288c) (Baker's yeast).